A 281-amino-acid polypeptide reads, in one-letter code: Pantothenate synthetase (281 aa).

26–33 is an ATP binding site; that stretch reads MGNLHDGH. Residue H33 is the Proton donor of the active site. Position 57 (Q57) interacts with (R)-pantoate. Beta-alanine is bound at residue Q57. 145 to 148 provides a ligand contact to ATP; the sequence is GEKD. Q151 serves as a coordination point for (R)-pantoate. 182-185 is an ATP binding site; sequence MSSR.

Belongs to the pantothenate synthetase family. Homodimer.

Its subcellular location is the cytoplasm. It catalyses the reaction (R)-pantoate + beta-alanine + ATP = (R)-pantothenate + AMP + diphosphate + H(+). Its pathway is cofactor biosynthesis; (R)-pantothenate biosynthesis; (R)-pantothenate from (R)-pantoate and beta-alanine: step 1/1. Functionally, catalyzes the condensation of pantoate with beta-alanine in an ATP-dependent reaction via a pantoyl-adenylate intermediate. The chain is Pantothenate synthetase from Idiomarina loihiensis (strain ATCC BAA-735 / DSM 15497 / L2-TR).